We begin with the raw amino-acid sequence, 206 residues long: Imidazole glycerol phosphate synthase subunit HisH (206 aa).

Residues 5 to 206 (SVVVLDYGSG…AVLRNWIERL (202 aa)) enclose the Glutamine amidotransferase type-1 domain. C83 acts as the Nucleophile in catalysis. Active-site residues include H187 and E189.

In terms of assembly, heterodimer of HisH and HisF.

It localises to the cytoplasm. It catalyses the reaction 5-[(5-phospho-1-deoxy-D-ribulos-1-ylimino)methylamino]-1-(5-phospho-beta-D-ribosyl)imidazole-4-carboxamide + L-glutamine = D-erythro-1-(imidazol-4-yl)glycerol 3-phosphate + 5-amino-1-(5-phospho-beta-D-ribosyl)imidazole-4-carboxamide + L-glutamate + H(+). The catalysed reaction is L-glutamine + H2O = L-glutamate + NH4(+). Its pathway is amino-acid biosynthesis; L-histidine biosynthesis; L-histidine from 5-phospho-alpha-D-ribose 1-diphosphate: step 5/9. Functionally, IGPS catalyzes the conversion of PRFAR and glutamine to IGP, AICAR and glutamate. The HisH subunit catalyzes the hydrolysis of glutamine to glutamate and ammonia as part of the synthesis of IGP and AICAR. The resulting ammonia molecule is channeled to the active site of HisF. The sequence is that of Imidazole glycerol phosphate synthase subunit HisH from Mycolicibacterium paratuberculosis (strain ATCC BAA-968 / K-10) (Mycobacterium paratuberculosis).